A 169-amino-acid chain; its full sequence is Ureidoglycolate lyase (169 aa).

Belongs to the ureidoglycolate lyase family. As to quaternary structure, homodimer. Requires Ni(2+) as cofactor.

It carries out the reaction (S)-ureidoglycolate = urea + glyoxylate. It functions in the pathway nitrogen metabolism; (S)-allantoin degradation. Functionally, catalyzes the catabolism of the allantoin degradation intermediate (S)-ureidoglycolate, generating urea and glyoxylate. Involved in the utilization of allantoin as nitrogen source. In Brucella abortus biovar 1 (strain 9-941), this protein is Ureidoglycolate lyase.